The following is a 205-amino-acid chain: Small ribosomal subunit protein mS26 (205 aa).

The N-terminal 27 residues, 1 to 27 (MLRALSRLGAGTPCRPRAPLVLPARGR), are a transit peptide targeting the mitochondrion.

It belongs to the mitochondrion-specific ribosomal protein mS26 family. Component of the mitochondrial small ribosomal subunit (mt-SSU). Mature mammalian 55S mitochondrial ribosomes consist of a small (28S) and a large (39S) subunit. The 28S small subunit contains a 12S ribosomal RNA (12S mt-rRNA) and 30 different proteins. The 39S large subunit contains a 16S rRNA (16S mt-rRNA), a copy of mitochondrial valine transfer RNA (mt-tRNA(Val)), which plays an integral structural role, and 52 different proteins.

It localises to the mitochondrion. This Homo sapiens (Human) protein is Small ribosomal subunit protein mS26 (MRPS26).